Consider the following 82-residue polypeptide: Costars family protein v1g158749 (82 aa).

This sequence belongs to the costars family.

In Nematostella vectensis (Starlet sea anemone), this protein is Costars family protein v1g158749.